Here is a 477-residue protein sequence, read N- to C-terminus: Endo-1,4-beta-xylanase A (477 aa).

A signal peptide spans 1–41 (MGSYALPRSGVRRSIRVLLLALVVGVLGTATALIAPPGAHA). Residues 42 to 340 (AESTLGAAAA…KAAYTAVLDA (299 aa)) enclose the GH10 domain. Residue E169 is the Proton donor of the active site. Catalysis depends on E277, which acts as the Nucleophile. A Ricin B-type lectin domain is found at 361–477 (SGRCLDVPDA…NGSNQRWTRT (117 aa)). 3 disulfide bridges follow: C364-C383, C406-C423, and C447-C466.

This sequence belongs to the glycosyl hydrolase 10 (cellulase F) family.

It localises to the secreted. The catalysed reaction is Endohydrolysis of (1-&gt;4)-beta-D-xylosidic linkages in xylans.. Its pathway is glycan degradation; xylan degradation. Functionally, contributes to hydrolyze hemicellulose, the major component of plant cell-walls. XLNA and XLNB seem to act sequentially on the substrate to yield xylobiose and xylose as carbon sources. The sequence is that of Endo-1,4-beta-xylanase A (xlnA) from Streptomyces lividans.